The following is a 69-amino-acid chain: Large ribosomal subunit protein bL31 (69 aa).

4 residues coordinate Zn(2+): Cys16, Cys18, Cys38, and Cys41.

This sequence belongs to the bacterial ribosomal protein bL31 family. Type A subfamily. Part of the 50S ribosomal subunit. Zn(2+) is required as a cofactor.

In terms of biological role, binds the 23S rRNA. The chain is Large ribosomal subunit protein bL31 from Thermobifida fusca (strain YX).